The primary structure comprises 302 residues: Lysosomal thioesterase PPT2 (302 aa).

The signal sequence occupies residues Met1–Ala27. An N-linked (GlcNAc...) asparagine glycan is attached at Asn60. Cystine bridges form between Cys109/Cys117 and Cys165/Cys176. Ser111 functions as the Nucleophile in the catalytic mechanism. N-linked (GlcNAc...) asparagine glycans are attached at residues Asn190 and Asn206. Asp228 is a catalytic residue. Asn245 is a glycosylation site (N-linked (GlcNAc...) asparagine). Cys276 and Cys296 are oxidised to a cystine. The active site involves His283. Residue Asn289 is glycosylated (N-linked (GlcNAc...) asparagine).

It belongs to the palmitoyl-protein thioesterase family. Expressed throughout the brain, primarily in neurons, and at lower levels in glial cells.

The protein resides in the lysosome. The catalysed reaction is hexadecanoyl-CoA + H2O = hexadecanoate + CoA + H(+). The enzyme catalyses S-hexadecanoyl-N-acetylcysteamine + H2O = N-acetylcysteamine + hexadecanoate + H(+). Catalyzes the cleavage of thioester bonds from S-palmitoyl-CoA or S-palmitoyl-N-acetylcysteamine (unbranched structures) but does not have activity against palmitoylcysteine or palmitoylated proteins, branched structures or bulky head groups. Conversely, hydrolyzes both long and short chain fatty acyl-CoA substrate. This Mus musculus (Mouse) protein is Lysosomal thioesterase PPT2 (Ppt2).